The sequence spans 265 residues: Metal-activated transcriptional activator protein AMT1 (265 aa).

Residues 1–40 (MVVINGVKYACDSCIKSHKAAQCEHNDRPLKILKPRGRPP) constitute a DNA-binding region (copper-fist). Zn(2+) is bound by residues C11, C14, C23, and H25. A disordered region spans residues 103-129 (RRKRTQKSNKKDNLSINSPTNNSPSPA). Low complexity predominate over residues 119–128 (NSPTNNSPSP).

Its subcellular location is the nucleus. Functionally, trans-acting regulatory protein that activates transcription of the MT genes (metallothionein) in response to copper or silver ions. This chain is Metal-activated transcriptional activator protein AMT1 (AMT1), found in Candida glabrata (strain ATCC 2001 / BCRC 20586 / JCM 3761 / NBRC 0622 / NRRL Y-65 / CBS 138) (Yeast).